We begin with the raw amino-acid sequence, 101 residues long: ATP-dependent Clp protease adapter protein ClpS (101 aa).

This sequence belongs to the ClpS family. Binds to the N-terminal domain of the chaperone ClpA.

Involved in the modulation of the specificity of the ClpAP-mediated ATP-dependent protein degradation. This Clostridium acetobutylicum (strain ATCC 824 / DSM 792 / JCM 1419 / IAM 19013 / LMG 5710 / NBRC 13948 / NRRL B-527 / VKM B-1787 / 2291 / W) protein is ATP-dependent Clp protease adapter protein ClpS.